The sequence spans 382 residues: Succinate--CoA ligase [ADP-forming] subunit beta (382 aa).

One can recognise an ATP-grasp domain in the interval 9-240; it reads KELFSKYGVK…PRDVTEFEAY (232 aa). Residues Lys45, 52-54, Val94, and Glu99 contribute to the ATP site; that span reads GRG. Asn193 and Asp207 together coordinate Mg(2+). Substrate-binding positions include Asn260 and 317–319; that span reads GIT.

It belongs to the succinate/malate CoA ligase beta subunit family. Heterotetramer of two alpha and two beta subunits. The cofactor is Mg(2+).

It catalyses the reaction succinate + ATP + CoA = succinyl-CoA + ADP + phosphate. The catalysed reaction is GTP + succinate + CoA = succinyl-CoA + GDP + phosphate. Its pathway is carbohydrate metabolism; tricarboxylic acid cycle; succinate from succinyl-CoA (ligase route): step 1/1. Functionally, succinyl-CoA synthetase functions in the citric acid cycle (TCA), coupling the hydrolysis of succinyl-CoA to the synthesis of either ATP or GTP and thus represents the only step of substrate-level phosphorylation in the TCA. The beta subunit provides nucleotide specificity of the enzyme and binds the substrate succinate, while the binding sites for coenzyme A and phosphate are found in the alpha subunit. This is Succinate--CoA ligase [ADP-forming] subunit beta from Pyrobaculum aerophilum (strain ATCC 51768 / DSM 7523 / JCM 9630 / CIP 104966 / NBRC 100827 / IM2).